The chain runs to 342 residues: DNA-directed RNA polymerase subunit alpha (342 aa).

The tract at residues 1-239 (MTTFLAKNWS…DQLQVFINFQ (239 aa)) is alpha N-terminal domain (alpha-NTD). The alpha C-terminal domain (alpha-CTD) stretch occupies residues 254 to 342 (INPVLLKKVY…SLAKKHEDQY (89 aa)).

Belongs to the RNA polymerase alpha chain family. In terms of assembly, homodimer. The RNAP catalytic core consists of 2 alpha, 1 beta, 1 beta' and 1 omega subunit. When a sigma factor is associated with the core the holoenzyme is formed, which can initiate transcription.

The catalysed reaction is RNA(n) + a ribonucleoside 5'-triphosphate = RNA(n+1) + diphosphate. DNA-dependent RNA polymerase catalyzes the transcription of DNA into RNA using the four ribonucleoside triphosphates as substrates. The chain is DNA-directed RNA polymerase subunit alpha from Orientia tsutsugamushi (strain Boryong) (Rickettsia tsutsugamushi).